Consider the following 364-residue polypeptide: Mannose-1-phosphate guanylyltransferase catalytic subunit beta (364 aa).

The tract at residues 2–220 (KALILVGGYG…PGFWMDVGQP (219 aa)) is substrate-binding domain. D109 is a GDP-alpha-D-mannose binding site. D109 contacts Mg(2+). The active site involves K160. Position 216 (D216) interacts with GDP-alpha-D-mannose. Mg(2+) is bound at residue D216. Residues 243-364 (ATGSNIHGTA…VNVPSKDIIM (122 aa)) are hexapeptide repeat domain.

It belongs to the transferase hexapeptide repeat family. As to quaternary structure, component of the GMPPA-GMPPB mannose-1-phosphate guanylyltransferase complex composed of 4 GMPPA subunits and 8 tag-335/GMPPB subunits; the complex is organized into three layers, a central layer made up of 2 GMPPA dimers sandwiched between two layers each made up of 2 tag-335/GMPPB dimers. Catalytic activity of tag-335/GMPPB is reduced when part of the complex and binding of GDP-alpha-D-Mannose by GMPPA induces allosteric feedback inhibition of tag-335/GMPPB. Mg(2+) is required as a cofactor.

It catalyses the reaction alpha-D-mannose 1-phosphate + GTP + H(+) = GDP-alpha-D-mannose + diphosphate. It functions in the pathway nucleotide-sugar biosynthesis; GDP-alpha-D-mannose biosynthesis; GDP-alpha-D-mannose from alpha-D-mannose 1-phosphate (GTP route): step 1/1. Its activity is regulated as follows. Enzyme activity is reduced by incorporation into the GMPPA-GMPPB mannose-1-phosphate guanylyltransferase complex. Allosterically inhibited, when part of the GMPPA-GMPPB complex, by GDP-alpha-D-mannose binding to GMPPA. Functionally, catalytic subunit of the GMPPA-GMPPB mannose-1-phosphate guanylyltransferase complex. Catalyzes the formation of GDP-mannose, an essential precursor of glycan moieties of glycoproteins and glycolipids. Can catalyze the reverse reaction in vitro. Together with GMPPA regulates GDP-alpha-D-mannose levels. The chain is Mannose-1-phosphate guanylyltransferase catalytic subunit beta from Caenorhabditis briggsae.